The primary structure comprises 444 residues: Na(+)-translocating NADH-quinone reductase subunit A (444 aa).

It belongs to the NqrA family. As to quaternary structure, composed of six subunits; NqrA, NqrB, NqrC, NqrD, NqrE and NqrF.

It carries out the reaction a ubiquinone + n Na(+)(in) + NADH + H(+) = a ubiquinol + n Na(+)(out) + NAD(+). Its function is as follows. NQR complex catalyzes the reduction of ubiquinone-1 to ubiquinol by two successive reactions, coupled with the transport of Na(+) ions from the cytoplasm to the periplasm. NqrA to NqrE are probably involved in the second step, the conversion of ubisemiquinone to ubiquinol. This Shewanella frigidimarina (strain NCIMB 400) protein is Na(+)-translocating NADH-quinone reductase subunit A.